Consider the following 258-residue polypeptide: Phosphate import ATP-binding protein PstB (258 aa).

The 241-residue stretch at 13-253 folds into the ABC transporter domain; it reads IKIENLNLWY…PREKSTEDYI (241 aa). 45 to 52 lines the ATP pocket; the sequence is GPSGCGKS.

Belongs to the ABC transporter superfamily. Phosphate importer (TC 3.A.1.7) family. As to quaternary structure, the complex is composed of two ATP-binding proteins (PstB), two transmembrane proteins (PstC and PstA) and a solute-binding protein (PstS).

Its subcellular location is the cell membrane. The catalysed reaction is phosphate(out) + ATP + H2O = ADP + 2 phosphate(in) + H(+). Part of the ABC transporter complex PstSACB involved in phosphate import. Responsible for energy coupling to the transport system. This Methanosarcina barkeri (strain Fusaro / DSM 804) protein is Phosphate import ATP-binding protein PstB.